Reading from the N-terminus, the 198-residue chain is Sulfite reductase, dissimilatory-type subunit alpha (198 aa).

[4Fe-4S] cluster is bound by residues C45, C64, C67, and C70. A 4Fe-4S ferredoxin-type domain is found at G55–E83.

As to quaternary structure, heterohexamer of two alpha, two beta and two gamma subunits.

Part of the complex that catalyzes the reduction of sulfite to sulfide. The alpha and beta subunits may have arisen by gene duplication. They both bind 2 iron-sulfur clusters, but the alpha subunit seems to be catalytically inactive, due to substitutions along the putative substrate access channel, and because it binds sirohydrochlorin (the dematallated form of siroheme) instead of siroheme. This Megalodesulfovibrio gigas (strain ATCC 19364 / DSM 1382 / NCIMB 9332 / VKM B-1759) (Desulfovibrio gigas) protein is Sulfite reductase, dissimilatory-type subunit alpha (dsrA).